Here is a 516-residue protein sequence, read N- to C-terminus: Myocyte-specific enhancer factor 2A homolog (516 aa).

Residues M1–D100 are interaction with hdac9. Positions R3–Y57 constitute an MADS-box domain. The segment at residues A58–E86 is a DNA-binding region (mef2-type). The interval P318–Q339 is disordered. The span at L327 to Q339 shows a compositional bias: polar residues. T343 carries the phosphothreonine; by NLK modification. Position 386 is a phosphoserine; by NLK (S386). Over residues G420–I433 the composition is skewed to polar residues. A disordered region spans residues G420–T516. The segment covering D465–D475 has biased composition (low complexity). 2 stretches are compositionally biased toward basic and acidic residues: residues G476 to F486 and N497 to T516.

Belongs to the MEF2 family. As to quaternary structure, interacts with hdac9 and nlk2. In terms of tissue distribution, restricted to the somitic mesoderm of early embryos. Expressed in the head region of neurula stage embryos and in body muscle (myotomes) of the tadpole. Expressed in all tissues examined in the adult.

The protein localises to the nucleus. Functionally, may regulate muscle-specific transcription in the embryo and may regulate transcription of a variety of cell types in the adult. Binds to the sequence 5'-CTA[TA]4TAR-3'. Acts downstream of nlk2 in anterior neural development, including eye formation. This is Myocyte-specific enhancer factor 2A homolog (mef2a) from Xenopus laevis (African clawed frog).